We begin with the raw amino-acid sequence, 523 residues long: Mitochondrial distribution and morphology protein 12 (523 aa).

The 483-residue stretch at 1 to 483 (MSFDINWEKL…WPSWICVDMA (483 aa)) folds into the SMP-LTD domain. Residues 108-117 (HEADIINDHD) are compositionally biased toward basic and acidic residues. 4 disordered regions span residues 108 to 160 (HEAD…QYDE), 178 to 213 (SASTPKRTSPQRPPLISPRGEVTQQTLSKPKEPFQS), 270 to 313 (KTKE…NAKN), and 483 to 523 (AEND…KKED). 2 stretches are compositionally biased toward acidic residues: residues 118 to 140 (YGDEDDIDDDYDNDSDDYDDDEN) and 148 to 158 (EDEENEESSQY). 2 stretches are compositionally biased toward polar residues: residues 178-187 (SASTPKRTSP) and 277-288 (SGDQQQGKQTGK). The span at 289-313 (ANEKGQKHKHEHEEEQGSDKQNAKN) shows a compositional bias: basic and acidic residues. Residues 483-501 (AENDDEEEDDDDDDHDEDN) show a composition bias toward acidic residues. Residues 502 to 523 (EGRGRMRDTGDVDVRDHDKKED) are compositionally biased toward basic and acidic residues.

The protein belongs to the MDM12 family. Component of the ER-mitochondria encounter structure (ERMES) or MDM complex, composed of MMM1, MDM10, MDM12 and MDM34. An MMM1 homodimer associates with one molecule of MDM12 on each side in a pairwise head-to-tail manner, and the SMP-LTD domains of MMM1 and MDM12 generate a continuous hydrophobic tunnel for phospholipid trafficking.

It is found in the mitochondrion outer membrane. Its subcellular location is the endoplasmic reticulum membrane. In terms of biological role, component of the ERMES/MDM complex, which serves as a molecular tether to connect the endoplasmic reticulum (ER) and mitochondria. Components of this complex are involved in the control of mitochondrial shape and protein biogenesis, and function in nonvesicular lipid trafficking between the ER and mitochondria. MDM12 is required for the interaction of the ER-resident membrane protein MMM1 and the outer mitochondrial membrane-resident beta-barrel protein MDM10. The MDM12-MMM1 subcomplex functions in the major beta-barrel assembly pathway that is responsible for biogenesis of all mitochondrial outer membrane beta-barrel proteins, and acts in a late step after the SAM complex. The MDM10-MDM12-MMM1 subcomplex further acts in the TOM40-specific pathway after the action of the MDM12-MMM1 complex. Essential for establishing and maintaining the structure of mitochondria and maintenance of mtDNA nucleoids. The sequence is that of Mitochondrial distribution and morphology protein 12 from Lodderomyces elongisporus (strain ATCC 11503 / CBS 2605 / JCM 1781 / NBRC 1676 / NRRL YB-4239) (Yeast).